The sequence spans 288 residues: Diaminopimelate epimerase (288 aa).

Residues Asn-14 and Asn-67 each coordinate substrate. Cys-76 acts as the Proton donor in catalysis. Residues 77–78, Asn-166, Asn-199, and 217–218 contribute to the substrate site; these read GN and ER. Cys-226 (proton acceptor) is an active-site residue. Residue 227 to 228 participates in substrate binding; it reads GT.

It belongs to the diaminopimelate epimerase family. Homodimer.

The protein resides in the cytoplasm. The enzyme catalyses (2S,6S)-2,6-diaminopimelate = meso-2,6-diaminopimelate. It functions in the pathway amino-acid biosynthesis; L-lysine biosynthesis via DAP pathway; DL-2,6-diaminopimelate from LL-2,6-diaminopimelate: step 1/1. Catalyzes the stereoinversion of LL-2,6-diaminopimelate (L,L-DAP) to meso-diaminopimelate (meso-DAP), a precursor of L-lysine and an essential component of the bacterial peptidoglycan. This Bacillus cereus (strain B4264) protein is Diaminopimelate epimerase.